Reading from the N-terminus, the 1131-residue chain is PPi-type phosphoenolpyruvate carboxykinase (1131 aa).

The protein belongs to the PPi-type phosphoenolpyruvate carboxykinase family. Monomer and trimer; forms heterotrimers with PEPCK2 and PEPCK3.

The catalysed reaction is oxaloacetate + diphosphate = phosphoenolpyruvate + phosphate + CO2. Functionally, inorganic pyrophosphate (PPi)-dependent phosphoenolpyruvate carboxykinase, which regulates the carbon flow of the central metabolism by fixing CO(2) to phosphoenolpyruvate to produce oxaloacetate. Can also produce pyruvate and diphosphate from phosphoenolpyruvate and phosphate. This chain is PPi-type phosphoenolpyruvate carboxykinase, found in Propionibacterium freudenreichii subsp. freudenreichii.